Consider the following 91-residue polypeptide: uncharacterized protein (91 aa).

A run of 2 helical transmembrane segments spans residues 5 to 27 and 47 to 69; these read FFKY…TNFQ and DFYH…FIFF.

Its subcellular location is the cell membrane. This is an uncharacterized protein from Archaeoglobus fulgidus (strain ATCC 49558 / DSM 4304 / JCM 9628 / NBRC 100126 / VC-16).